The following is a 253-amino-acid chain: Ribosome-inactivating protein saporin-5 (253 aa).

Glu-176 is an active-site residue.

The protein belongs to the ribosome-inactivating protein family. Type 1 RIP subfamily.

The enzyme catalyses Endohydrolysis of the N-glycosidic bond at one specific adenosine on the 28S rRNA.. Ribosome-inactivating protein of type 1, inhibits protein synthesis in animal cells. This Saponaria officinalis (Common soapwort) protein is Ribosome-inactivating protein saporin-5 (SAP5).